A 1159-amino-acid polypeptide reads, in one-letter code: Calcium-activated potassium channel subunit alpha-1 (1159 aa).

Topologically, residues 1–24 (EPNMDALIIPVTMEVPCDSRGQRM) are extracellular. The helical transmembrane segment at 25 to 45 (WWAFLASSMVTFFGGLFIILL) threads the bilayer. Over 46–116 (WRTLKYLWTV…MISAQTLTGR (71 aa)) the chain is Cytoplasmic. 3 S-palmitoyl cysteine lipidation sites follow: Cys-56, Cys-57, and Cys-59. A helical membrane pass occupies residues 117-137 (VLVVLVFALSIGALVIYFIDS). Over 138 to 152 (SNPIESCQNFYKDFT) the chain is Extracellular. A helical transmembrane segment spans residues 153-173 (LQIDMAFNVFFLLYFGLRFIA). Over 174-177 (ANDN) the chain is Cytoplasmic. Residues 178-198 (LWFWLEVNSVVDFFTVPPVFV) traverse the membrane as a helical segment. Residues 199–202 (SVYL) lie on the Extracellular side of the membrane. Residues 203–223 (NRSWLGLRFLRALRLIQFSEI) form a helical; Voltage-sensor membrane-spanning segment. Topologically, residues 224–238 (LQFLNILKTSNSIKL) are cytoplasmic. Residues 239–259 (VNLLSIFISTWLTAAGFIHLV) form a helical membrane-spanning segment. Residues 260–273 (ENSGDPWENFQNSQ) lie on the Extracellular side of the membrane. Positions 274–296 (ALTYWECVYLLMVTMSTVGYGDV) form an intramembrane region, pore-forming. The short motif at 290 to 293 (TVGY) is the Selectivity for potassium element. At 297-305 (YAKTTPGGL) the chain is on the extracellular side. Residues 306–326 (FIVFFILGGLAMFASYVPEII) form a helical membrane-spanning segment. Topologically, residues 327–1159 (EIIGNRKKYG…PPIREVEDEC (833 aa)) are cytoplasmic. An RCK N-terminal 1 domain is found at 345–487 (RKHIVVCGHI…WNWKEGDDAI (143 aa)). Mg(2+) is bound by residues Glu-377, Gln-400, and Glu-402. Residues 494–514 (LGFIAQSCLAQGLSTMLANLF) are segment S7. The tract at residues 551 to 571 (LSFPTVCELCFVKLKLLMIAI) is segment S8. The segment at 615 to 619 (CKACH) is heme-binding motif. The disordered stretch occupies residues 639–668 (EQPSTLSPKKKQRNGGMRNSPSSSPKLMRH). Thr-643 is modified (phosphothreonine). Ser-645, Ser-658, and Ser-662 each carry phosphoserine. Positions 717–737 (VLSGHVVVCIFGHVSSALIGL) are segment S9. An RCK N-terminal 2 domain is found at 719-863 (SGHVVVCIFG…MDKSSPDNSP (145 aa)). Thr-850 is modified (phosphothreonine). Phosphoserine occurs at positions 858 and 862. A Calcium bowl motif is present at residues 883–905 (TELVNDTNVQFLDQDDDDDPDTE). Gln-892, Asp-895, Asp-898, and Asp-900 together coordinate Ca(2+). Residues 912–932 (FACGTAFAVSVLDSLMSATYF) form a segment S10 region. The segment covering 1066–1091 (RASLSHSSHSSQSSSKKSSSVHSIPS) has biased composition (low complexity). The disordered stretch occupies residues 1066-1124 (RASLSHSSHSSQSSSKKSSSVHSIPSTANRQNRPKSRESRDKQTEKKWFTDEPDNAYPR). Residues 1100–1115 (KSRESRDKQTEKKWFT) are compositionally biased toward basic and acidic residues. Residues Ser-1101 and Ser-1104 each carry the phosphoserine modification.

It belongs to the potassium channel family. Calcium-activated (TC 1.A.1.3) subfamily. KCa1.1/KCNMA1 sub-subfamily. In terms of assembly, homotetramer; which constitutes the calcium-activated potassium channel. Interacts with beta subunits KCNMB1, KCNMB2, KCNMB3 and KCNMB4. Interacts with gamma subunits LRRC26, LRRC38, LRRC52 and LRRC55. Beta and gamma subunits are accessory, and modulate its activity. Interacts with RAB11B. Post-translationally, phosphorylated. Phosphorylation by kinases such as PKA and/or PKG. In smooth muscles, phosphorylation affects its activity. Palmitoylation by ZDHHC22 and ZDHHC23 within the intracellular linker between the S0 and S1 transmembrane domains regulates localization to the plasma membrane. Depalmitoylated by LYPLA1 and LYPLAL1, leading to retard exit from the trans-Golgi network. Expressed in all vascular and smooth muscles.

It is found in the cell membrane. It carries out the reaction K(+)(in) = K(+)(out). With respect to regulation, ethanol and carbon monoxide-bound heme increase channel activation. Heme inhibits channel activation. Potassium channel activated by both membrane depolarization or increase in cytosolic Ca(2+) that mediates export of K(+). It is also activated by the concentration of cytosolic Mg(2+). Its activation dampens the excitatory events that elevate the cytosolic Ca(2+) concentration and/or depolarize the cell membrane. It therefore contributes to repolarization of the membrane potential. Plays a key role in controlling excitability in a number of systems, such as regulation of the contraction of smooth muscle, the tuning of hair cells in the cochlea, regulation of transmitter release, and innate immunity. In smooth muscles, its activation by high level of Ca(2+), caused by ryanodine receptors in the sarcoplasmic reticulum, regulates the membrane potential. In cochlea cells, its number and kinetic properties partly determine the characteristic frequency of each hair cell and thereby helps to establish a tonotopic map. Kinetics of KCNMA1 channels are determined by alternative splicing, phosphorylation status and its combination with modulating beta subunits. Highly sensitive to both iberiotoxin (IbTx) and charybdotoxin (CTX). This chain is Calcium-activated potassium channel subunit alpha-1 (KCNMA1), found in Canis lupus familiaris (Dog).